The primary structure comprises 697 residues: Elongation factor G 2 (697 aa).

The tr-type G domain maps to 5–280 (SKYRNIGIFA…AVVDYLPAPD (276 aa)). GTP contacts are provided by residues 14-21 (AHVDAGKT), 78-82 (DTPGH), and 132-135 (NKLD).

Belongs to the TRAFAC class translation factor GTPase superfamily. Classic translation factor GTPase family. EF-G/EF-2 subfamily.

The protein localises to the cytoplasm. Catalyzes the GTP-dependent ribosomal translocation step during translation elongation. During this step, the ribosome changes from the pre-translocational (PRE) to the post-translocational (POST) state as the newly formed A-site-bound peptidyl-tRNA and P-site-bound deacylated tRNA move to the P and E sites, respectively. Catalyzes the coordinated movement of the two tRNA molecules, the mRNA and conformational changes in the ribosome. This Shewanella denitrificans (strain OS217 / ATCC BAA-1090 / DSM 15013) protein is Elongation factor G 2.